Consider the following 429-residue polypeptide: E3 ubiquitin-protein ligase ZNRF4 (429 aa).

A signal peptide spans 1 to 27; the sequence is MLRCRPEPLMPRATRVAVAVSLPLSHA. Topologically, residues 28–250 are lumenal; the sequence is VIPTQLPSHP…PPCRDLDCHP (223 aa). Residues 30–64 are disordered; that stretch reads PTQLPSHPGHRPSGRPRRCPKAPCLPSPVGLSSTQ. Residues 37–49 are compositionally biased toward basic residues; sequence PGHRPSGRPRRCP. N152 carries N-linked (GlcNAc...) asparagine glycosylation. In terms of domain architecture, PA spans 152–223; that stretch reads NRSLGAIALI…VGEAASQDLR (72 aa). The helical transmembrane segment at 251 to 271 threads the bilayer; sequence VLTVSWALGRTLALVVSTLFV. Residues 272-429 are Cytoplasmic-facing; the sequence is LNRLWLWAQA…SPAPPEAPGQ (158 aa). The segment at 309–352 adopts an RING-type; atypical zinc-finger fold; sequence CAICLDEYEEGDQLKILPCSHTYHCKCIDPWFSQAPRRSCPVCK. Disordered stretches follow at residues 358–381 and 409–429; these read TEDS…GHRP and TTSL…APGQ. Over residues 409–420 the composition is skewed to polar residues; that stretch reads TTSLEAEDTTVS.

As to quaternary structure, interacts with CANX.

It localises to the endoplasmic reticulum membrane. The enzyme catalyses S-ubiquitinyl-[E2 ubiquitin-conjugating enzyme]-L-cysteine + [acceptor protein]-L-lysine = [E2 ubiquitin-conjugating enzyme]-L-cysteine + N(6)-ubiquitinyl-[acceptor protein]-L-lysine.. The protein operates within protein modification; protein ubiquitination. Its function is as follows. E3 ubiquitin-protein ligase that acts as a negative regulator of NOD2 signaling by mediating ubiquitination and degradation of RIPK2. Also catalyzes ubiquitination and proteasomal degradation of CANX within the endoplasmic reticulum. Could have a role in spermatogenesis. This Macaca fascicularis (Crab-eating macaque) protein is E3 ubiquitin-protein ligase ZNRF4 (ZNRF4).